Here is a 206-residue protein sequence, read N- to C-terminus: ATP-dependent Clp protease proteolytic subunit 1 (206 aa).

Ser-106 (nucleophile) is an active-site residue. His-131 is an active-site residue.

Belongs to the peptidase S14 family. Fourteen ClpP subunits assemble into 2 heptameric rings which stack back to back to give a disk-like structure with a central cavity, resembling the structure of eukaryotic proteasomes.

The protein resides in the cytoplasm. The enzyme catalyses Hydrolysis of proteins to small peptides in the presence of ATP and magnesium. alpha-casein is the usual test substrate. In the absence of ATP, only oligopeptides shorter than five residues are hydrolyzed (such as succinyl-Leu-Tyr-|-NHMec, and Leu-Tyr-Leu-|-Tyr-Trp, in which cleavage of the -Tyr-|-Leu- and -Tyr-|-Trp bonds also occurs).. Its function is as follows. Cleaves peptides in various proteins in a process that requires ATP hydrolysis. Has a chymotrypsin-like activity. Plays a major role in the degradation of misfolded proteins. This is ATP-dependent Clp protease proteolytic subunit 1 from Methylococcus capsulatus (strain ATCC 33009 / NCIMB 11132 / Bath).